Reading from the N-terminus, the 462-residue chain is Glycine--tRNA ligase (462 aa).

Substrate-binding residues include Arg-99 and Glu-174. Residues 206-208, 216-221, 290-291, and 334-337 contribute to the ATP site; these read RNE, FRTREF, EL, and GADR. 221 to 225 contacts substrate; sequence FEQME. 330–334 is a substrate binding site; sequence EPSLG.

Belongs to the class-II aminoacyl-tRNA synthetase family. Homodimer.

It localises to the cytoplasm. The enzyme catalyses tRNA(Gly) + glycine + ATP = glycyl-tRNA(Gly) + AMP + diphosphate. Catalyzes the attachment of glycine to tRNA(Gly). The polypeptide is Glycine--tRNA ligase (Macrococcus caseolyticus (strain JCSC5402) (Macrococcoides caseolyticum)).